A 373-amino-acid chain; its full sequence is tRNA N6-adenosine threonylcarbamoyltransferase (373 aa).

A divalent metal cation is bound by residues H133, H137, and Y154. Substrate is bound by residues Y154 to G158, D186, G201, E205, and N302. An a divalent metal cation-binding site is contributed by D331.

It belongs to the KAE1 / TsaD family. As to quaternary structure, component of the EKC/KEOPS complex composed of at least BUD32, CGI121, GON7, KAE1 and PCC1; the whole complex dimerizes. A divalent metal cation is required as a cofactor.

The protein localises to the cytoplasm. Its subcellular location is the nucleus. The catalysed reaction is L-threonylcarbamoyladenylate + adenosine(37) in tRNA = N(6)-L-threonylcarbamoyladenosine(37) in tRNA + AMP + H(+). In terms of biological role, component of the EKC/KEOPS complex that is required for the formation of a threonylcarbamoyl group on adenosine at position 37 (t(6)A37) in tRNAs that read codons beginning with adenine. The complex is probably involved in the transfer of the threonylcarbamoyl moiety of threonylcarbamoyl-AMP (TC-AMP) to the N6 group of A37. KAE1 likely plays a direct catalytic role in this reaction, but requires other protein(s) of the complex to fulfill this activity. The EKC/KEOPS complex also promotes both telomere uncapping and telomere elongation. The complex is required for efficient recruitment of transcriptional coactivators. This Debaryomyces hansenii (strain ATCC 36239 / CBS 767 / BCRC 21394 / JCM 1990 / NBRC 0083 / IGC 2968) (Yeast) protein is tRNA N6-adenosine threonylcarbamoyltransferase.